Reading from the N-terminus, the 502-residue chain is Probable glycine dehydrogenase (decarboxylating) subunit 2 (502 aa).

The residue at position 273 (lysine 273) is an N6-(pyridoxal phosphate)lysine.

Belongs to the GcvP family. C-terminal subunit subfamily. The glycine cleavage system is composed of four proteins: P, T, L and H. In this organism, the P 'protein' is a heterodimer of two subunits. Pyridoxal 5'-phosphate is required as a cofactor.

The catalysed reaction is N(6)-[(R)-lipoyl]-L-lysyl-[glycine-cleavage complex H protein] + glycine + H(+) = N(6)-[(R)-S(8)-aminomethyldihydrolipoyl]-L-lysyl-[glycine-cleavage complex H protein] + CO2. The glycine cleavage system catalyzes the degradation of glycine. The P protein binds the alpha-amino group of glycine through its pyridoxal phosphate cofactor; CO(2) is released and the remaining methylamine moiety is then transferred to the lipoamide cofactor of the H protein. This Thermococcus gammatolerans (strain DSM 15229 / JCM 11827 / EJ3) protein is Probable glycine dehydrogenase (decarboxylating) subunit 2.